We begin with the raw amino-acid sequence, 633 residues long: Probable potassium transport system protein Kup 3 (633 aa).

Transmembrane regions (helical) follow at residues leucine 24–phenylalanine 44, valine 61–valine 81, leucine 114–isoleucine 134, proline 148–valine 168, phenylalanine 180–phenylalanine 200, isoleucine 222–leucine 242, tryptophan 258–leucine 278, isoleucine 298–glycine 318, isoleucine 348–phenylalanine 368, alanine 377–methionine 397, leucine 405–alanine 425, and isoleucine 427–isoleucine 447.

The protein belongs to the HAK/KUP transporter (TC 2.A.72) family.

The protein localises to the cell inner membrane. The catalysed reaction is K(+)(in) + H(+)(in) = K(+)(out) + H(+)(out). Functionally, transport of potassium into the cell. Likely operates as a K(+):H(+) symporter. The polypeptide is Probable potassium transport system protein Kup 3 (Rhizobium johnstonii (strain DSM 114642 / LMG 32736 / 3841) (Rhizobium leguminosarum bv. viciae)).